A 558-amino-acid chain; its full sequence is Potassium-transporting ATPase potassium-binding subunit 2 (558 aa).

Transmembrane regions (helical) follow at residues 1-21, 60-80, 129-149, 169-189, 246-266, 281-301, 326-346, 353-373, 376-396, 415-435, 485-505, and 523-543; these read MSIV…SRYL, IKHF…LLLI, VITF…IAML, FIVR…ISQG, WSNY…VFLF, IMIF…CLYF, FGIG…TGTV, LTPL…VFGG, VGLM…SLMI, IALS…LAFI, IVML…VSSL, and LFFS…TFLP.

This sequence belongs to the KdpA family. In terms of assembly, the system is composed of three essential subunits: KdpA, KdpB and KdpC.

It localises to the cell membrane. In terms of biological role, part of the high-affinity ATP-driven potassium transport (or Kdp) system, which catalyzes the hydrolysis of ATP coupled with the electrogenic transport of potassium into the cytoplasm. This subunit binds the extracellular potassium ions and delivers the ions to the membrane domain of KdpB through an intramembrane tunnel. This chain is Potassium-transporting ATPase potassium-binding subunit 2, found in Staphylococcus aureus (strain Mu50 / ATCC 700699).